Consider the following 248-residue polypeptide: Probable transcriptional regulatory protein RPB_4273 (248 aa).

A disordered region spans residues 1–22; that stretch reads MAGHSQFKNIMHRKGKQDAQRS.

Belongs to the TACO1 family.

It is found in the cytoplasm. In Rhodopseudomonas palustris (strain HaA2), this protein is Probable transcriptional regulatory protein RPB_4273.